We begin with the raw amino-acid sequence, 487 residues long: ATP synthase subunit beta (487 aa).

Residue 164 to 171 participates in ATP binding; it reads GGAGVGKT.

The protein belongs to the ATPase alpha/beta chains family. F-type ATPases have 2 components, CF(1) - the catalytic core - and CF(0) - the membrane proton channel. CF(1) has five subunits: alpha(3), beta(3), gamma(1), delta(1), epsilon(1). CF(0) has four main subunits: a(1), b(1), b'(1) and c(9-12).

The protein resides in the cellular thylakoid membrane. The enzyme catalyses ATP + H2O + 4 H(+)(in) = ADP + phosphate + 5 H(+)(out). Its function is as follows. Produces ATP from ADP in the presence of a proton gradient across the membrane. The catalytic sites are hosted primarily by the beta subunits. This Synechococcus sp. (strain CC9605) protein is ATP synthase subunit beta.